The following is an 88-amino-acid chain: Small ribosomal subunit protein bS20 (88 aa).

This sequence belongs to the bacterial ribosomal protein bS20 family.

In terms of biological role, binds directly to 16S ribosomal RNA. The protein is Small ribosomal subunit protein bS20 of Brucella abortus (strain S19).